A 161-amino-acid polypeptide reads, in one-letter code: Ribonuclease H (161 aa).

An RNase H type-1 domain is found at methionine 1–glutamine 142. Positions 10, 48, 70, and 134 each coordinate Mg(2+).

Belongs to the RNase H family. Monomer. It depends on Mg(2+) as a cofactor.

The protein localises to the cytoplasm. It carries out the reaction Endonucleolytic cleavage to 5'-phosphomonoester.. Its function is as follows. Endonuclease that specifically degrades the RNA of RNA-DNA hybrids. This chain is Ribonuclease H (rnhA), found in Buchnera aphidicola subsp. Schizaphis graminum (strain Sg).